A 160-amino-acid chain; its full sequence is Transcription antitermination protein NusB (160 aa).

This sequence belongs to the NusB family.

In terms of biological role, involved in transcription antitermination. Required for transcription of ribosomal RNA (rRNA) genes. Binds specifically to the boxA antiterminator sequence of the ribosomal RNA (rrn) operons. The chain is Transcription antitermination protein NusB from Rhizobium johnstonii (strain DSM 114642 / LMG 32736 / 3841) (Rhizobium leguminosarum bv. viciae).